The chain runs to 179 residues: MSTSHDRAVLNQILNPLMPTSDSGIAEIHLESDSLEHPGYELSLQLEREGVALAEGVRLDEAIEKFTKALEVCPKNPSAYNNRAQAYRLQNKPEKALDDLNEALSLAGPKTKTACQAYVQRASIYRLRGDDDKARTDFASAAELGSSFAKMQLVALNPYAAMCNKMLAEVFEKAKTGED.

TPR repeat units lie at residues 43 to 76, 78 to 110, and 115 to 148; these read SLQLEREGVALAEGVRLDEAIEKFTKALEVCPKN, SAYNNRAQAYRLQNKPEKALDDLNEALSLAGPK, and CQAYVQRASIYRLRGDDDKARTDFASAAELGSSF.

This sequence belongs to the TTC36 family.

The chain is Tetratricopeptide repeat protein 36 from Caenorhabditis elegans.